An 865-amino-acid polypeptide reads, in one-letter code: AdoMet-dependent rRNA methyltransferase SPB1 (865 aa).

Positions 56, 58, 76, 92, and 117 each coordinate S-adenosyl-L-methionine. K157 functions as the Proton acceptor in the catalytic mechanism. Coiled coils occupy residues 358 to 400 (ESMD…VRMQ) and 462 to 492 (GETD…RKAA). Disordered regions lie at residues 370 to 396 (LEKL…QKDI) and 443 to 676 (VVAS…TKDG). Residues 386–396 (RKENERKQKDI) show a composition bias toward basic and acidic residues. Acidic residues predominate over residues 463–483 (ETDDESDEELDRLETELDDMY). The span at 484-497 (DQFRERKAASDAKY) shows a compositional bias: basic and acidic residues. Residues 526–545 (ISDDSELEEESSGDSDDEDD) are compositionally biased toward acidic residues. The segment covering 556–566 (LDTTPSDNSGL) has biased composition (polar residues). Over residues 600 to 609 (GEDEDADMED) the composition is skewed to acidic residues. Basic and acidic residues-rich tracts occupy residues 610 to 627 (TVSK…ADKK) and 659 to 676 (KSGK…TKDG). Residues 762-789 (REAKGRKKMKAAQRLEKLKKKSDLLVNE) adopt a coiled-coil conformation.

It belongs to the class I-like SAM-binding methyltransferase superfamily. RNA methyltransferase RlmE family. SPB1 subfamily. Component of the nucleolar and nucleoplasmic pre-60S ribosomal particle.

It localises to the nucleus. Its subcellular location is the nucleolus. The catalysed reaction is a ribonucleotide in rRNA + S-adenosyl-L-methionine = a 2'-O-methylribonucleotide in rRNA + S-adenosyl-L-homocysteine + H(+). Functionally, required for proper assembly of pre-ribosomal particles during the biogenesis of the 60S ribosomal subunit. The polypeptide is AdoMet-dependent rRNA methyltransferase SPB1 (Pyricularia oryzae (strain 70-15 / ATCC MYA-4617 / FGSC 8958) (Rice blast fungus)).